Here is a 377-residue protein sequence, read N- to C-terminus: Putative efflux system component YknX (377 aa).

A helical membrane pass occupies residues 3–23; sequence KVWIGIGIAVIVALFVGINIY. A coiled-coil region spans residues 95–187; sequence TNEQLSLEKE…RVSDLEVKSE (93 aa).

This sequence belongs to the membrane fusion protein (MFP) (TC 8.A.1) family. In terms of assembly, part of a complex composed of YknX, YknY and YknZ. The complex interacts with YknW.

It is found in the cell membrane. Functionally, part of an unusual four-component transporter, which is required for protection against the killing factor SdpC (sporulation-delaying protein). The chain is Putative efflux system component YknX (yknX) from Bacillus subtilis (strain 168).